The following is a 159-amino-acid chain: MKHRILSILLENESGALSRVVGLFSQRGYNIESITVAPTEDLSISKITIQTFGDKKVIEQIGKQLHKLIDVLKVTEIEDEEHFKREIMLIKINNTYDQYRKVQDITNAFRGYIISATSNISIIQLSGTNKNLDTYIEIMKKLTNIIEISRSGIISIYKN.

One can recognise an ACT domain in the interval 5-79 (ILSILLENES…DVLKVTEIED (75 aa)).

The protein belongs to the acetolactate synthase small subunit family. In terms of assembly, dimer of large and small chains.

It catalyses the reaction 2 pyruvate + H(+) = (2S)-2-acetolactate + CO2. Its pathway is amino-acid biosynthesis; L-isoleucine biosynthesis; L-isoleucine from 2-oxobutanoate: step 1/4. It functions in the pathway amino-acid biosynthesis; L-valine biosynthesis; L-valine from pyruvate: step 1/4. This is Acetolactate synthase small subunit (ilvH) from Buchnera aphidicola subsp. Baizongia pistaciae (strain Bp).